The sequence spans 454 residues: 3-phosphoshikimate 1-carboxyvinyltransferase (454 aa).

Residues 1-31 are disordered; it reads MSENHSEGASRPVISRRPAAGLRADHPVHVP. Residues K34, S35, and R39 each contribute to the 3-phosphoshikimate site. K34 contributes to the phosphoenolpyruvate binding site. Phosphoenolpyruvate-binding residues include G107 and R135. Residues S180, Q182, D334, and K361 each contribute to the 3-phosphoshikimate site. Q182 is a binding site for phosphoenolpyruvate. The active-site Proton acceptor is D334. 2 residues coordinate phosphoenolpyruvate: R365 and R409.

It belongs to the EPSP synthase family. Monomer.

Its subcellular location is the cytoplasm. It catalyses the reaction 3-phosphoshikimate + phosphoenolpyruvate = 5-O-(1-carboxyvinyl)-3-phosphoshikimate + phosphate. The protein operates within metabolic intermediate biosynthesis; chorismate biosynthesis; chorismate from D-erythrose 4-phosphate and phosphoenolpyruvate: step 6/7. Its function is as follows. Catalyzes the transfer of the enolpyruvyl moiety of phosphoenolpyruvate (PEP) to the 5-hydroxyl of shikimate-3-phosphate (S3P) to produce enolpyruvyl shikimate-3-phosphate and inorganic phosphate. The polypeptide is 3-phosphoshikimate 1-carboxyvinyltransferase (Granulibacter bethesdensis (strain ATCC BAA-1260 / CGDNIH1)).